The chain runs to 544 residues: CTP synthase (544 aa).

Positions 1–265 (MTKFIFVTGG…DNIITEQLQL (265 aa)) are amidoligase domain. Ser-13 is a binding site for CTP. Ser-13 is a binding site for UTP. ATP contacts are provided by residues 14-19 (SLGKGI) and Asp-71. Positions 71 and 139 each coordinate Mg(2+). Residues 146-148 (DIE), 186-191 (KTKPTQ), and Lys-222 each bind CTP. Residues 186 to 191 (KTKPTQ) and Lys-222 contribute to the UTP site. A Glutamine amidotransferase type-1 domain is found at 290-544 (KIAMVGKYVD…VKAALNNKKA (255 aa)). Gly-353 serves as a coordination point for L-glutamine. Residue Cys-380 is the Nucleophile; for glutamine hydrolysis of the active site. Residues 381–384 (LGMQ), Glu-404, and Arg-471 contribute to the L-glutamine site. Catalysis depends on residues His-517 and Glu-519.

This sequence belongs to the CTP synthase family. As to quaternary structure, homotetramer.

It carries out the reaction UTP + L-glutamine + ATP + H2O = CTP + L-glutamate + ADP + phosphate + 2 H(+). It catalyses the reaction L-glutamine + H2O = L-glutamate + NH4(+). The catalysed reaction is UTP + NH4(+) + ATP = CTP + ADP + phosphate + 2 H(+). The protein operates within pyrimidine metabolism; CTP biosynthesis via de novo pathway; CTP from UDP: step 2/2. Its activity is regulated as follows. Allosterically activated by GTP, when glutamine is the substrate; GTP has no effect on the reaction when ammonia is the substrate. The allosteric effector GTP functions by stabilizing the protein conformation that binds the tetrahedral intermediate(s) formed during glutamine hydrolysis. Inhibited by the product CTP, via allosteric rather than competitive inhibition. Its function is as follows. Catalyzes the ATP-dependent amination of UTP to CTP with either L-glutamine or ammonia as the source of nitrogen. Regulates intracellular CTP levels through interactions with the four ribonucleotide triphosphates. The protein is CTP synthase of Neisseria gonorrhoeae (strain ATCC 700825 / FA 1090).